We begin with the raw amino-acid sequence, 497 residues long: Pancreatic alpha-amylase (497 aa).

Gln-1 carries the pyrrolidone carboxylic acid modification. 3 disulfides stabilise this stretch: Cys-28–Cys-86, Cys-70–Cys-115, and Cys-141–Cys-160. The Ca(2+) site is built by Asn-100, Arg-158, and Asp-167. Arg-195 provides a ligand contact to chloride. The Nucleophile role is filled by Asp-197. Residue His-201 coordinates Ca(2+). The active-site Proton donor is Glu-233. Asn-298 and Arg-337 together coordinate chloride. 2 cysteine pairs are disulfide-bonded: Cys-379/Cys-385 and Cys-451/Cys-463.

The protein belongs to the glycosyl hydrolase 13 family. In terms of assembly, monomer. It depends on Ca(2+) as a cofactor. The cofactor is chloride.

The protein resides in the secreted. Its subcellular location is the extracellular space. The enzyme catalyses Endohydrolysis of (1-&gt;4)-alpha-D-glucosidic linkages in polysaccharides containing three or more (1-&gt;4)-alpha-linked D-glucose units.. The polypeptide is Pancreatic alpha-amylase (Struthio camelus (Common ostrich)).